Consider the following 424-residue polypeptide: Protein-glutamate methylesterase/protein-glutamine glutaminase (424 aa).

In terms of domain architecture, Response regulatory spans 6 to 123; sequence RVLVVDDSAF…SLDDFTRQLT (118 aa). D57 carries the 4-aspartylphosphate modification. The tract at residues 177-210 is disordered; it reads SRLSPGRSPGGKEGVAGAVSAGSTRGEAIRPGKG. Positions 229–423 constitute a CheB-type methylesterase domain; sequence RRPGIEVVAI…PAIVALVTGA (195 aa). Active-site residues include S241, H268, and D365.

This sequence belongs to the CheB family. Post-translationally, phosphorylated by CheA. Phosphorylation of the N-terminal regulatory domain activates the methylesterase activity.

It localises to the cytoplasm. The catalysed reaction is [protein]-L-glutamate 5-O-methyl ester + H2O = L-glutamyl-[protein] + methanol + H(+). The enzyme catalyses L-glutaminyl-[protein] + H2O = L-glutamyl-[protein] + NH4(+). Functionally, involved in chemotaxis. Part of a chemotaxis signal transduction system that modulates chemotaxis in response to various stimuli. Catalyzes the demethylation of specific methylglutamate residues introduced into the chemoreceptors (methyl-accepting chemotaxis proteins or MCP) by CheR. Also mediates the irreversible deamidation of specific glutamine residues to glutamic acid. The protein is Protein-glutamate methylesterase/protein-glutamine glutaminase of Moorella thermoacetica (strain ATCC 39073 / JCM 9320).